We begin with the raw amino-acid sequence, 343 residues long: Small ribosomal subunit biogenesis GTPase RsgA (343 aa).

Residues 116-275 (RGQLKPVAAN…LIDSPGIREF (160 aa)) form the CP-type G domain. Residues 163-166 (NKAD) and 217-225 (GQSGVGKSS) each bind GTP. Positions 299, 304, 306, and 312 each coordinate Zn(2+).

Belongs to the TRAFAC class YlqF/YawG GTPase family. RsgA subfamily. Monomer. Associates with 30S ribosomal subunit, binds 16S rRNA. Zn(2+) is required as a cofactor.

It localises to the cytoplasm. One of several proteins that assist in the late maturation steps of the functional core of the 30S ribosomal subunit. Helps release RbfA from mature subunits. May play a role in the assembly of ribosomal proteins into the subunit. Circularly permuted GTPase that catalyzes slow GTP hydrolysis, GTPase activity is stimulated by the 30S ribosomal subunit. The protein is Small ribosomal subunit biogenesis GTPase RsgA of Pseudomonas syringae pv. tomato (strain ATCC BAA-871 / DC3000).